We begin with the raw amino-acid sequence, 189 residues long: Protein Rex (189 aa).

Basic residues predominate over residues Met1 to Pro16. Residues Met1 to Leu26 form a disordered region. The short motif at Pro2–Thr18 is the Nuclear localization signal, and RNA-binding (RxRE) element. Positions Arg56–Ser70 are homomultimerization. Position 70 is a phosphoserine; by host (Ser70). The Nuclear export signal motif lies at Leu82 to Gly93. A disordered region spans residues Tyr87 to Arg189. Residues Ile115 to Ser125 are compositionally biased toward pro residues. Positions Pro123 to Thr131 are homomultimerization. Thr174 carries the post-translational modification Phosphothreonine; by host. Ser177 carries the phosphoserine; by host modification. Positions Phe178–Arg189 are enriched in pro residues.

This sequence belongs to the deltaretrovirus Rex protein family. Homomultimer. Multimeric assembly is essential for activity and involves XPO1. Binds to human XPO1 and KPNB1. Interacts (via N-terminal nuclear localization signal) with human NPM1. Phosphorylated.

Its subcellular location is the host nucleus. It localises to the host nucleolus. The protein localises to the host cytoplasm. Rex escorts unspliced gag-pro-pol and singly spliced env mRNAs out of the nucleus of infected cells. These mRNAs carry a recognition sequence called Rex responsive element (RxRE or XRE) located at the 3' region of the long terminal repeat (LTR). This function is essential since most HTLV proteins are translated from unspliced or partially spliced pre-mRNAs that cannot exit the nucleus by the pathway used by fully processed cellular mRNAs. Rex itself is translated from a fully spliced mRNA that probably readily exits the nucleus. Rex's nuclear localization signal (NLS) binds directly to KPNB1/importin beta-1 without previous binding to KPNA1/importin alpha-1. KPNB1 binds to the GDP bound form of RAN (Ran-GDP) and targets Rex to the nucleus. In the nucleus, the conversion from Ran-GDP to Ran-GTP dissociates Rex from KPNB1 and allows Rex's binding to the RRE in viral pre-mRNAs. Rex multimerizes on the RRE via cooperative assembly. This multimerization is critical for its full biological activity, since it may shield the viral RNA from being spliced or down-regulated, and probably exposes Rex's nuclear export signal (NES) to the surface. Rex can then form a complex with XPO1/CRM1, RANBP3 and Ran-GTP, leading to nuclear export of the complex. Conversion from Ran-GTP to Ran-GDP mediates dissociation of the Rex/RRE/XPO1/RANBP3/RAN complex, so that Rex can return to the nucleus for a subsequent round of export. The chain is Protein Rex from Homo sapiens (Human).